Reading from the N-terminus, the 294-residue chain is Cytidine deaminase (294 aa).

CMP/dCMP-type deaminase domains lie at 48-168 (DEDA…FGPK) and 186-294 (LEGD…VLLG). A substrate-binding site is contributed by 89 to 91 (NME). A Zn(2+)-binding site is contributed by histidine 102. The active-site Proton donor is glutamate 104. Residues cysteine 129 and cysteine 132 each contribute to the Zn(2+) site.

This sequence belongs to the cytidine and deoxycytidylate deaminase family. Homodimer. Requires Zn(2+) as cofactor.

It carries out the reaction cytidine + H2O + H(+) = uridine + NH4(+). The catalysed reaction is 2'-deoxycytidine + H2O + H(+) = 2'-deoxyuridine + NH4(+). In terms of biological role, this enzyme scavenges exogenous and endogenous cytidine and 2'-deoxycytidine for UMP synthesis. The sequence is that of Cytidine deaminase from Citrobacter koseri (strain ATCC BAA-895 / CDC 4225-83 / SGSC4696).